A 148-amino-acid polypeptide reads, in one-letter code: 3-dehydroquinate dehydratase (148 aa).

The Proton acceptor role is filled by Tyr-24. Substrate-binding residues include Asn-75, His-81, and Asp-88. His-101 functions as the Proton donor in the catalytic mechanism. Substrate-binding positions include 102-103 and Arg-112; that span reads LS.

It belongs to the type-II 3-dehydroquinase family. As to quaternary structure, homododecamer.

The catalysed reaction is 3-dehydroquinate = 3-dehydroshikimate + H2O. The protein operates within metabolic intermediate biosynthesis; chorismate biosynthesis; chorismate from D-erythrose 4-phosphate and phosphoenolpyruvate: step 3/7. Catalyzes a trans-dehydration via an enolate intermediate. The sequence is that of 3-dehydroquinate dehydratase from Bartonella henselae (strain ATCC 49882 / DSM 28221 / CCUG 30454 / Houston 1) (Rochalimaea henselae).